A 178-amino-acid chain; its full sequence is Interleukin-10 (178 aa).

An N-terminal signal peptide occupies residues 1 to 18 (MHSSALLCCLVFLTGVRA). Cystine bridges form between Cys-30-Cys-126 and Cys-80-Cys-132. N-linked (GlcNAc...) asparagine glycosylation is present at Asn-134.

The protein belongs to the IL-10 family. In terms of assembly, homodimer. Interacts with IL10RA and IL10RB.

The protein resides in the secreted. Its function is as follows. Major immune regulatory cytokine that acts on many cells of the immune system where it has profound anti-inflammatory functions, limiting excessive tissue disruption caused by inflammation. Mechanistically, IL10 binds to its heterotetrameric receptor comprising IL10RA and IL10RB leading to JAK1 and STAT2-mediated phosphorylation of STAT3. In turn, STAT3 translocates to the nucleus where it drives expression of anti-inflammatory mediators. Targets antigen-presenting cells (APCs) such as macrophages and monocytes and inhibits their release of pro-inflammatory cytokines including granulocyte-macrophage colony-stimulating factor /GM-CSF, granulocyte colony-stimulating factor/G-CSF, IL-1 alpha, IL-1 beta, IL-6, IL-8 and TNF-alpha. Also interferes with antigen presentation by reducing the expression of MHC-class II and co-stimulatory molecules, thereby inhibiting their ability to induce T cell activation. In addition, controls the inflammatory response of macrophages by reprogramming essential metabolic pathways including mTOR signaling. The polypeptide is Interleukin-10 (IL10) (Callithrix jacchus (White-tufted-ear marmoset)).